The sequence spans 593 residues: Probable ubiquitin carboxyl-terminal hydrolase 4 (593 aa).

The region spanning 227–573 (IGLTNLGNTC…SSYILFYKRS (347 aa)) is the USP domain. C236 functions as the Nucleophile in the catalytic mechanism. Residues S338 and S343 each carry the phosphoserine modification. H530 functions as the Proton acceptor in the catalytic mechanism.

The protein belongs to the peptidase C19 family. As to quaternary structure, interacts with sfp47.

It localises to the cytoplasm. It is found in the endosome. The catalysed reaction is Thiol-dependent hydrolysis of ester, thioester, amide, peptide and isopeptide bonds formed by the C-terminal Gly of ubiquitin (a 76-residue protein attached to proteins as an intracellular targeting signal).. Functionally, has an ATP-independent isopeptidase activity, cleaving at the C-terminus of the ubiquitin moiety. Acts late in the proteolytic pathway in conjunction with the 26S proteasome. Plays a role in avoiding DNA overreplication. In Schizosaccharomyces pombe (strain 972 / ATCC 24843) (Fission yeast), this protein is Probable ubiquitin carboxyl-terminal hydrolase 4 (ubp4).